The sequence spans 380 residues: uncharacterized protein (380 aa).

Residues 1–18 (MALRHLALLAGLLVGVAS) form the signal peptide. Residues Asn-104, Asn-111, and Asn-128 are each glycosylated (N-linked (GlcNAc...) asparagine). Residues 148–168 (LFLGTFFISSGLILSVAGFFY) traverse the membrane as a helical segment. 2 disordered regions span residues 229–256 (PQTG…QGQG) and 336–380 (RFSG…ISNV). Positions 240 to 249 (PPLPGSPGDP) are enriched in pro residues. Residues 356 to 366 (VRRERPLDRAT) show a composition bias toward basic and acidic residues.

The protein localises to the membrane. This is an uncharacterized protein from Homo sapiens (Human).